The primary structure comprises 163 residues: Small ribosomal subunit protein uS9 (163 aa).

Residues 1 to 41 (MAENTNDSAVLETEEELTSYTTETNAGAGTGTSTIAPGYGT) form a disordered region. Positions 18–38 (TSYTTETNAGAGTGTSTIAPG) are enriched in low complexity.

This sequence belongs to the universal ribosomal protein uS9 family.

In Bifidobacterium adolescentis (strain ATCC 15703 / DSM 20083 / NCTC 11814 / E194a), this protein is Small ribosomal subunit protein uS9.